The following is a 424-amino-acid chain: S-phase kinase-associated protein 2 (424 aa).

The segment at Met-1 to Asp-220 is mediates interaction with hepatitis C virus non-structural protein NS5A. A disordered region spans residues Ser-39–Lys-73. At Ser-64 the chain carries Phosphoserine. The Nuclear localization signal motif lies at Arg-67 to Lys-73. An N6-acetyllysine; by p300/EP300 mark is found at Lys-68 and Lys-71. Residues Ser-72 and Ser-75 each carry the phosphoserine modification. One can recognise an F-box domain in the interval Gly-94–Leu-140. LRR repeat units lie at residues Val-151 to Glu-176, His-177 to Gln-204, Asn-210 to Arg-234, Leu-235 to Arg-257, Leu-258 to Thr-284, Thr-286 to Arg-308, Cys-309 to Glu-330, Leu-334 to Leu-356, Ile-359 to Leu-378, and Lys-380 to Ile-401. Ser-179 carries the phosphoserine modification. The mediates interaction with IFI27 stretch occupies residues Gly-402 to Leu-424.

As to quaternary structure, part of a SCF(SKP2) complex consisting of CUL1, RBX1, SKP1 and SKP2. Component of a SCF(SKP2)-like complex containing CUL1, SKP1, TRIM21 and SKP2. Interacts directly with CUL1 and SKP1. Interacts with CKS1. Interacts with ASB2 which is the substrate-recognition component of a probable ECS E3 ubiquitin-protein ligase complex; ASB2 is likely to bridge the formation of dimeric E3-ubiquitin-protein ligase complexes composed of an ECS complex and an SCF(SKP2) complex. Interacts with the cyclin-A-CDK2 complex. Interacts with ORC1, phosphorylated CDT1, phosphorylated RBL2, ELF4, phosphorylated RAG2, FOXO1, UBP43, MYC, TOB1, TAL1 and KMT2A/MLL1. Interacts with TRIM21. Interacts with cyclin-E. Interacts with IFI27; promotes the ubiquitin-mediated proteasomal degradation of hepatitis C virus/HCV non-structural protein NS5A. Interacts with CARM1. In terms of assembly, (Microbial infection) Interacts with hepatitis C virus/HCV non-structural protein NS5A; promotes the ubiquitin-mediated proteasomal degradation of NS5A. In terms of processing, phosphorylated on serine and threonine resudues in response to DNA damage, promoting 'Lys-63'-linked ubiquitination of NBN. Ubiquitinated by the APC/C complex, leading to its degradation by the proteasome. Deubiquitinated by USP13. Post-translationally, acetylation at Lys-68 and Lys-71 increases stability through impairment of APC/C-mediated proteolysis and promotes cytoplasmic retention. Deacetylated by SIRT3.

The protein localises to the cytoplasm. It localises to the nucleus. Its pathway is protein modification; protein ubiquitination. In terms of biological role, substrate recognition component of a SCF (SKP1-CUL1-F-box protein) E3 ubiquitin-protein ligase complex which mediates the ubiquitination and subsequent proteasomal degradation of target proteins involved in cell cycle progression, signal transduction and transcription. Specifically recognizes phosphorylated CDKN1B/p27kip and is involved in regulation of G1/S transition. Degradation of CDKN1B/p27kip also requires CKS1. Recognizes target proteins ORC1, CDT1, RBL2, KMT2A/MLL1, CDK9, RAG2, NBN, FOXO1, UBP43, YTHDF2, and probably MYC, TOB1 and TAL1. Degradation of TAL1 also requires STUB1. Recognizes CDKN1A in association with CCNE1 or CCNE2 and CDK2. Promotes ubiquitination and destruction of CDH1 in a CK1-dependent manner, thereby regulating cell migration. Following phosphorylation in response to DNA damage, mediates 'Lys-63'-linked ubiquitination of NBN, promoting ATM recruitment to DNA damage sites and DNA repair via homologous recombination. Functionally, through the ubiquitin-mediated proteasomal degradation of hepatitis C virus non-structural protein 5A, has an antiviral activity towards that virus. The polypeptide is S-phase kinase-associated protein 2 (SKP2) (Homo sapiens (Human)).